Consider the following 473-residue polypeptide: Photosystem II CP43 reaction center protein (473 aa).

Positions 1–14 (MKILYSLRRFYHVE) are excised as a propeptide. At T15 the chain carries N-acetylthreonine. T15 is subject to Phosphothreonine. 5 consecutive transmembrane segments (helical) span residues 69-93 (LFEV…PHLA), 134-155 (LLGP…KDRN), 178-200 (KALY…RKIT), 255-275 (KPFA…LSYS), and 291-312 (WFNN…ASQA). Residue E367 coordinates [CaMn4O5] cluster. Residues 447-471 (RARAAAAGFEKGIDRDLEPVLYMTP) traverse the membrane as a helical segment.

This sequence belongs to the PsbB/PsbC family. PsbC subfamily. PSII is composed of 1 copy each of membrane proteins PsbA, PsbB, PsbC, PsbD, PsbE, PsbF, PsbH, PsbI, PsbJ, PsbK, PsbL, PsbM, PsbT, PsbX, PsbY, PsbZ, Psb30/Ycf12, at least 3 peripheral proteins of the oxygen-evolving complex and a large number of cofactors. It forms dimeric complexes. Binds multiple chlorophylls and provides some of the ligands for the Ca-4Mn-5O cluster of the oxygen-evolving complex. It may also provide a ligand for a Cl- that is required for oxygen evolution. PSII binds additional chlorophylls, carotenoids and specific lipids. serves as cofactor.

Its subcellular location is the plastid. The protein resides in the chloroplast thylakoid membrane. One of the components of the core complex of photosystem II (PSII). It binds chlorophyll and helps catalyze the primary light-induced photochemical processes of PSII. PSII is a light-driven water:plastoquinone oxidoreductase, using light energy to abstract electrons from H(2)O, generating O(2) and a proton gradient subsequently used for ATP formation. In Saccharum hybrid (Sugarcane), this protein is Photosystem II CP43 reaction center protein.